The chain runs to 175 residues: Co-chaperone protein HscB homolog (175 aa).

One can recognise a J domain in the interval 7 to 79 (SHFALFNLPE…LKRARYLLSL (73 aa)).

It belongs to the HscB family. As to quaternary structure, interacts with HscA and stimulates its ATPase activity.

Functionally, co-chaperone involved in the maturation of iron-sulfur cluster-containing proteins. Seems to help targeting proteins to be folded toward HscA. The polypeptide is Co-chaperone protein HscB homolog (Paraburkholderia phymatum (strain DSM 17167 / CIP 108236 / LMG 21445 / STM815) (Burkholderia phymatum)).